The sequence spans 479 residues: ATP synthase subunit beta (479 aa).

Residue 153-160 (GGAGVGKT) participates in ATP binding.

The protein belongs to the ATPase alpha/beta chains family. In terms of assembly, F-type ATPases have 2 components, CF(1) - the catalytic core - and CF(0) - the membrane proton channel. CF(1) has five subunits: alpha(3), beta(3), gamma(1), delta(1), epsilon(1). CF(0) has three main subunits: a(1), b(2) and c(9-12). The alpha and beta chains form an alternating ring which encloses part of the gamma chain. CF(1) is attached to CF(0) by a central stalk formed by the gamma and epsilon chains, while a peripheral stalk is formed by the delta and b chains.

The protein localises to the cell membrane. The catalysed reaction is ATP + H2O + 4 H(+)(in) = ADP + phosphate + 5 H(+)(out). Its activity is regulated as follows. Increases 2-fold following exposure to low pH. Produces ATP from ADP in the presence of a proton gradient across the membrane. The catalytic sites are hosted primarily by the beta subunits. The polypeptide is ATP synthase subunit beta (Lactobacillus acidophilus (strain ATCC 700396 / NCK56 / N2 / NCFM)).